A 298-amino-acid polypeptide reads, in one-letter code: Dioxygenase aneA (298 aa).

The Fe cation site is built by histidine 134, aspartate 136, and histidine 213.

It belongs to the PhyH family. As to quaternary structure, homodimer. Fe cation serves as cofactor.

The catalysed reaction is aculene D + 2-oxoglutarate + O2 = aculene C + succinate + CO2 + H2O. It carries out the reaction aculene B + 2-oxoglutarate + O2 = aculene A + succinate + CO2 + H2O. The protein operates within secondary metabolite biosynthesis. Dioxygenase; part of the gene cluster that mediates the biosynthesis of aculenes, a unique type of norsesquiterpenes that contain a nordaucane skeleton linked to an L-proline moiety and are of mixed biosynthetic origin. The pathway begins with the synthesis of dauca-4,7-diene by the terpene cyclase aneC using farnesyl pyrophosphate (FPP) as substrate. The cytochrome P450 monooxygenase aneF then performs the initial oxidation at C-12 of dauca-4,7-diene to yield asperaculane D. Asperaculane D is substrate of the cytochrome P450 monooxygenase aneD for C-10 hydroxylation to yield asperaculane E. The cytochrome P450 monooxygenase aneG then converts asperaculane E into aculene D via C-2 oxidation. The monomodular nonribosomal peptide synthase aneB adenylates L-proline and the thiohydrolase aneE transfers this activated L-proline derivative to aculenes D and C to produce respectively aculenes B and A. The dioxygenase aneA converts aculene D into aculene C, and aculene B into aculene A by introducing the 5,6-alkene moiety. Asperculanes A, B, C and F, as well as 14-prolyl asperculane C, might be shunt products of the pathway. This Aspergillus aculeatus (strain ATCC 16872 / CBS 172.66 / WB 5094) protein is Dioxygenase aneA.